A 264-amino-acid chain; its full sequence is COP9 signalosome complex subunit 7b (264 aa).

Position 2 is an N-acetylalanine (alanine 2). One can recognise a PCI domain in the interval 2–159 (AGEQKPSSNL…QLLEVDFCIG (158 aa)). Residues 188 to 237 (IEQQVLRANQYKENHNRTQQQVEAEVTNIKKTLKATASSSAQEMEQQLAE) adopt a coiled-coil conformation. Positions 223 to 232 (TASSSAQEME) are enriched in polar residues. The segment at 223-264 (TASSSAQEMEQQLAERECPPHAEQRQPTKKMSKVKGLVSSRH) is disordered. Over residues 235-248 (LAERECPPHAEQRQ) the composition is skewed to basic and acidic residues. Phosphothreonine is present on serine 261. Arginine 263 is subject to Phosphoserine.

This sequence belongs to the CSN7/EIF3M family. CSN7 subfamily. Component of the CSN complex, composed of COPS1/GPS1, COPS2, COPS3, COPS4, COPS5, COPS6, COPS7 (COPS7A or COPS7B), COPS8 and COPS9 isoform 1. In the complex, it probably interacts directly with COPS1, COPS2, COPS4, COPS5, COPS6 and COPS8. Interacts with EIF3S6. In terms of assembly, (Microbial infection) Interacts with vaccinia virus protein C9L.

It is found in the cytoplasm. Its subcellular location is the nucleus. Component of the COP9 signalosome complex (CSN), a complex involved in various cellular and developmental processes. The CSN complex is an essential regulator of the ubiquitin (Ubl) conjugation pathway by mediating the deneddylation of the cullin subunits of SCF-type E3 ligase complexes, leading to decrease the Ubl ligase activity of SCF-type complexes such as SCF, CSA or DDB2. The complex is also involved in phosphorylation of p53/TP53, JUN, I-kappa-B-alpha/NFKBIA, ITPK1 and IRF8/ICSBP, possibly via its association with CK2 and PKD kinases. CSN-dependent phosphorylation of TP53 and JUN promotes and protects degradation by the Ubl system, respectively. This chain is COP9 signalosome complex subunit 7b (COPS7B), found in Homo sapiens (Human).